Consider the following 190-residue polypeptide: Putative transcription factor ovo-like protein 3 (190 aa).

Disordered regions lie at residues M1–P21 and S35–R65. Residues A41 to S62 are compositionally biased toward polar residues. C2H2-type zinc fingers lie at residues L70 to H92, H98 to H120, F126 to H149, and H165 to H187.

Belongs to the krueppel C2H2-type zinc-finger protein family.

It is found in the nucleus. May act as a transcription regulator. The protein is Putative transcription factor ovo-like protein 3 (OVOL3) of Homo sapiens (Human).